We begin with the raw amino-acid sequence, 77 residues long: Vacuolar ATPase assembly integral membrane protein VMA21 (77 aa).

Topologically, residues 1 to 8 are cytoplasmic; that stretch reads MAVDVPTS. The chain crosses the membrane as a helical span at residues 9–29; that stretch reads VIVKLMFFTLAMVSFPVLTFF. Topologically, residues 30–41 are lumenal; it reads VSQQYTSNTLVN. A helical membrane pass occupies residues 42–62; it reads GGLAALAANVVLFAYVIMAFS. Residues 63–77 are Cytoplasmic-facing; that stretch reads EDVPQSDGKESKKQQ. Positions 74–77 match the Prevents secretion from ER motif; the sequence is KKQQ.

The protein belongs to the VMA21 family.

It localises to the endoplasmic reticulum membrane. The protein localises to the endoplasmic reticulum-Golgi intermediate compartment membrane. The protein resides in the cytoplasmic vesicle. It is found in the COPII-coated vesicle membrane. Its function is as follows. Required for the assembly of the V0 complex of the vacuolar ATPase (V-ATPase) in the endoplasmic reticulum. This is Vacuolar ATPase assembly integral membrane protein VMA21 from Eremothecium gossypii (strain ATCC 10895 / CBS 109.51 / FGSC 9923 / NRRL Y-1056) (Yeast).